The sequence spans 192 residues: Phosphoheptose isomerase (192 aa).

The 156-residue stretch at 37 to 192 (LADSFKAGGK…IQLIEKEMEK (156 aa)) folds into the SIS domain. 52–54 (NGG) contacts substrate. Residues histidine 61 and glutamate 65 each coordinate Zn(2+). Residues glutamate 65, 93–94 (ND), 119–121 (STS), serine 124, and glutamine 172 each bind substrate. Glutamine 172 and histidine 180 together coordinate Zn(2+).

This sequence belongs to the SIS family. GmhA subfamily. Homotetramer. The cofactor is Zn(2+).

The protein resides in the cytoplasm. The catalysed reaction is 2 D-sedoheptulose 7-phosphate = D-glycero-alpha-D-manno-heptose 7-phosphate + D-glycero-beta-D-manno-heptose 7-phosphate. The protein operates within carbohydrate biosynthesis; D-glycero-D-manno-heptose 7-phosphate biosynthesis; D-glycero-alpha-D-manno-heptose 7-phosphate and D-glycero-beta-D-manno-heptose 7-phosphate from sedoheptulose 7-phosphate: step 1/1. Functionally, catalyzes the isomerization of sedoheptulose 7-phosphate in D-glycero-D-manno-heptose 7-phosphate. The chain is Phosphoheptose isomerase from Proteus mirabilis (strain HI4320).